The primary structure comprises 79 residues: Delta-hormotoxin-Cpt1b (79 aa).

The signal sequence occupies residues 1 to 20; the sequence is MKTQVLALFVLCVLFCLAES. A propeptide spanning residues 21–31 is cleaved from the precursor; it reads RTTLNKRNDIE. Disulfide bonds link Cys36–Cys75, Cys38–Cys66, and Cys56–Cys76.

The protein belongs to the sea anemone sodium channel inhibitory toxin family.

The protein resides in the secreted. Its subcellular location is the nematocyst. Its function is as follows. In neuromuscular preparation of crustaceans, the toxin increased neurotransmitter release, causing repetitive firing of the axons. May affect sodium channels (Nav). The chain is Delta-hormotoxin-Cpt1b from Calliactis parasitica (Sea anemone).